The primary structure comprises 230 residues: Urease accessory protein UreF (230 aa).

It belongs to the UreF family. In terms of assembly, ureD, UreF and UreG form a complex that acts as a GTP-hydrolysis-dependent molecular chaperone, activating the urease apoprotein by helping to assemble the nickel containing metallocenter of UreC. The UreE protein probably delivers the nickel.

The protein resides in the cytoplasm. Functionally, required for maturation of urease via the functional incorporation of the urease nickel metallocenter. The chain is Urease accessory protein UreF from Allorhizobium ampelinum (strain ATCC BAA-846 / DSM 112012 / S4) (Agrobacterium vitis (strain S4)).